The following is a 554-amino-acid chain: Solute carrier family 22 member 1 (554 aa).

Topologically, residues 1 to 21 (MPTVDDVLEQVGEFGWFQKRT) are cytoplasmic. Residues 22–42 (FLFLCLISAILAPIYLGIVFL) form a helical membrane-spanning segment. The Extracellular portion of the chain corresponds to 43–149 (GFTPDHRCRS…LVCADAWKVD (107 aa)). Residue N71 is glycosylated (N-linked (GlcNAc...) asparagine). A helical membrane pass occupies residues 150 to 170 (LFQSCVNLGFFLGSLGVGYIA). Residues 171–176 (DRFGRK) are Cytoplasmic-facing. Residues 177–197 (LCLLLTTLINAVSGVLTAVAP) form a helical membrane-spanning segment. Topologically, residues 198–206 (DYTSMLLFR) are extracellular. Residues 207-229 (LLQGLVSKGSWMSGYTLITEFVG) traverse the membrane as a helical segment. Topologically, residues 230 to 237 (SGYRRTVA) are cytoplasmic. Residues 238–258 (ILYQVAFSVGLVALSGVAYAI) traverse the membrane as a helical segment. Residues 259–262 (PNWR) are Extracellular-facing. Residues 263 to 283 (WLQLTVSLPTFLCLFYYWCVP) form a helical membrane-spanning segment. The Proline-rich sequence signature appears at 283-287 (PESPR). Topologically, residues 284–347 (ESPRWLLSQK…FRTPNLRKHT (64 aa)) are cytoplasmic. S333 is subject to Phosphoserine. A helical membrane pass occupies residues 348–368 (FILMFLWFTCSVLYQGLILHM). Residues 369–374 (GATGGN) are Extracellular-facing. Residues 375 to 395 (VYLDFFYSSLVEFPAAFVILV) form a helical membrane-spanning segment. The Cytoplasmic segment spans residues 396-402 (TIDRVGR). The helical transmembrane segment at 403–423 (IYPMAASNLAAGVASVILIFV) threads the bilayer. The Extracellular segment spans residues 424–431 (PQDLHWLT). The helical transmembrane segment at 432–452 (IVLSCVGRMGATIVLQMICLV) threads the bilayer. The Cytoplasmic segment spans residues 453 to 464 (NAELYPTFVRNL). Residues 465–485 (GVMVCSALCDVGGIITPFMVF) form a helical membrane-spanning segment. The Extracellular portion of the chain corresponds to 486–492 (RLMEVWQ). Residues 493–513 (PLPLIVFGVLGLLAGGMTLLL) traverse the membrane as a helical segment. At 514-554 (PETKGVALPETIEDAENLRRKAKPKESKIYLQVQTSELKGP) the chain is on the cytoplasmic side.

It belongs to the major facilitator (TC 2.A.1) superfamily. Organic cation transporter (TC 2.A.1.19) family. Phosphorylated. As to expression, expressed in kidney, liver and intestine.

The protein localises to the basolateral cell membrane. It is found in the apical cell membrane. It localises to the lateral cell membrane. The protein resides in the basal cell membrane. The catalysed reaction is 1-methylnicotinamide(out) = 1-methylnicotinamide(in). The enzyme catalyses dopamine(out) = dopamine(in). It carries out the reaction serotonin(out) = serotonin(in). It catalyses the reaction (R)-adrenaline(out) = (R)-adrenaline(in). The catalysed reaction is (R)-noradrenaline(out) = (R)-noradrenaline(in). The enzyme catalyses histamine(out) = histamine(in). It carries out the reaction guanidine(out) = guanidine(in). It catalyses the reaction choline(out) = choline(in). The catalysed reaction is acetylcholine(in) = acetylcholine(out). The enzyme catalyses thiamine(in) = thiamine(out). It carries out the reaction spermidine(in) = spermidine(out). It catalyses the reaction agmatine(out) = agmatine(in). The catalysed reaction is putrescine(out) = putrescine(in). The enzyme catalyses (R)-carnitine(in) = (R)-carnitine(out). It carries out the reaction O-isobutanoyl-(R)-carnitine(in) = O-isobutanoyl-(R)-carnitine(out). It catalyses the reaction O-acetyl-(R)-carnitine(in) = O-acetyl-(R)-carnitine(out). The catalysed reaction is O-3-hydroxybutanoyl-(R)-carnitine(in) = O-3-hydroxybutanoyl-(R)-carnitine(out). The enzyme catalyses O-propanoyl-(R)-carnitine(in) = O-propanoyl-(R)-carnitine(out). It carries out the reaction O-butanoyl-(R)-carnitine(in) = O-butanoyl-(R)-carnitine(out). It catalyses the reaction O-2-methylbutanoyl-(R)-carnitine(in) = O-2-methylbutanoyl-(R)-carnitine(out). The catalysed reaction is O-3-methylbutanoyl-(R)-carnitine(in) = O-3-methylbutanoyl-(R)-carnitine(out). The enzyme catalyses O-hexanoyl-(R)-carnitine(in) = O-hexanoyl-(R)-carnitine(out). It carries out the reaction L-histidyl-L-proline diketopiperazine(in) = L-histidyl-L-proline diketopiperazine(out). It catalyses the reaction (R)-salsolinol(in) = (R)-salsolinol(out). The catalysed reaction is prostaglandin F2alpha(out) = prostaglandin F2alpha(in). The enzyme catalyses prostaglandin E2(out) = prostaglandin E2(in). Phosphorylation of the transporter leads to changes in its substrate affinity, resulting in a regulation of the transport activity. In contrast with rat ortholog, ASP uptake is inhibited by protein kinase A (PKA) and C (PKC) activation. ASP uptake is also endogenously activated by calmodulin, the calmodulin-dependent kinase II and LCK tyrosine kinase. Inhibited by cGMP, most likely through a cGMP-binding protein that interacts with OCT1. Its function is as follows. Electrogenic voltage-dependent transporter that mediates the transport of a variety of organic cations such as endogenous bioactive amines, cationic drugs and xenobiotics. Functions as a pH- and Na(+)-independent, bidirectional transporter. Cation cellular uptake or release is driven by the electrochemical potential (i.e. membrane potential and concentration gradient) and substrate selectivity. Hydrophobicity is a major requirement for recognition in polyvalent substrates and inhibitors. Primarily expressed in the basolateral membrane of hepatocytes and proximal tubules and involved in the uptake and disposition of cationic compounds from the blood by hepatic and renal clearance. Most likely functions as an uptake carrier in enterocytes contributing to the intestinal elimination of organic cations from the systemic circulation. Transports endogenous monoamines such as N-1-methylnicotinamide (NMN), guanidine, neurotransmitters dopamine, serotonin, noradrenaline, adrenaline and histamine, and quaternary ammonium compound such as choline. Also transports natural polyamines such as spermidine, agmatine and putrescine at low affinity, but relatively high turnover. Involved in the hepatic and intestinal uptake of the vitamin B1/thiamine, hence regulating hepatic lipid and energy metabolism. Contributes to the influx and efflux of fatty acid carriers carnitines and acylcarnitines across the basolateral membrane of hepatocytes, from the liver to the systemic circulation and inversely and may be involved in regulating the systemic availability of hepatic acylcarnitines. Also capable of transporting non-amine endogenous compounds such as prostaglandin E2 (PGE2) and prostaglandin F2-alpha (PGF2-alpha). May contribute to the transport of cationic compounds in testes across the blood-testis-barrier. Also mediates the uptake of xenobiotics tributylmethylammonium (TBuMA), quinidine, N-methyl-quinine (NMQ), N-methyl-quinidine (NMQD) N-(4,4-azo-n-pentyl)-quinuclidine (APQ), azidoprocainamide methoiodide (AMP), N-(4,4-azo-n-pentyl)-21-deoxyajmalinium (APDA) and 4-(4-(dimethylamino)styryl)-N-methylpyridinium (ASP). This Oryctolagus cuniculus (Rabbit) protein is Solute carrier family 22 member 1 (SLC22A1).